We begin with the raw amino-acid sequence, 1451 residues long: Glutamate receptor ionotropic, NMDA 2A (1451 aa).

An N-terminal signal peptide occupies residues 1–20; that stretch reads MGMFVLLLYTFLYAGDLGHG. Topologically, residues 21 to 547 are extracellular; that stretch reads AEKSFPVLNI…PSAFLEPFSA (527 aa). An N-linked (GlcNAc...) asparagine glycan is attached at Asn67. Cys79 and Cys312 are disulfide-bonded. The Zn(2+) site is built by His120, Asp258, and Asp274. Residues Asn332, Asn372, Asn435, and Asn436 are each glycosylated (N-linked (GlcNAc...) asparagine). Cystine bridges form between Cys421-Cys447 and Cys428-Cys448. L-glutamate is bound by residues Ser503, Thr505, and Arg510. A glycan (N-linked (GlcNAc...) asparagine) is linked at Asn533. The chain crosses the membrane as a helical span at residues 548–568; sequence SVWVMMFVMLLLVSAMAVFIF. Residues 569-592 lie on the Cytoplasmic side of the membrane; it reads EYFSPVGYNRNLAQGKDPHGPSFT. The segment at 591-612 is pore-forming; the sequence is FTIGKAVWLLWGLVFNNSVPVQ. The discontinuously helical intramembrane region spans 593-612; the sequence is IGKAVWLLWGLVFNNSVPVQ. At 613-617 the chain is on the cytoplasmic side; that stretch reads NPKGT. Residues 618–637 traverse the membrane as a helical segment; the sequence is TSKIIVSIWAFFAVIFLASY. Over 638 to 808 the chain is Extracellular; the sequence is TANLAAFMIQ…VMSSQLDIDN (171 aa). N-linked (GlcNAc...) asparagine glycosylation occurs at Asn679. The L-glutamate site is built by Ser681, Thr682, and Asp723. A disulfide bond links Cys737 and Cys792. The chain crosses the membrane as a helical span at residues 809-829; it reads MAGVFYMLAAAMALSLITFVW. Residues 830–1451 lie on the Cytoplasmic side of the membrane; sequence EHLFYWKLRF…KKMPSLESDV (622 aa). The segment covering 1011-1022 has biased composition (polar residues); that stretch reads TLRQTQGSVNEN. Disordered regions lie at residues 1011–1080 and 1100–1165; these read TLRQ…VSAK and NRDK…GRLP. Composition is skewed to basic and acidic residues over residues 1055 to 1073, 1100 to 1113, and 1138 to 1149; these read CHID…DNLK, NRDK…DKEP, and YQDHNDNYRKTE.

The protein belongs to the glutamate-gated ion channel (TC 1.A.10.1) family. As to quaternary structure, heterotetramer. Forms heterotetrameric channels composed of two GluN1/zeta subunits (GRIN1), and two identical GluN2/epsilon subunits (GRIN2A, GRIN2B, GRIN2C or GRIN2D) or GluN3 subunits (GRIN3A or GRIN3B) (in vitro). In vivo, the subunit composition may depend on the expression levels of the different subunits.

The protein resides in the cell membrane. It localises to the postsynaptic cell membrane. The enzyme catalyses Ca(2+)(in) = Ca(2+)(out). The catalysed reaction is Na(+)(in) = Na(+)(out). It carries out the reaction K(+)(in) = K(+)(out). Component of N-methyl-D-aspartate (NMDA) receptors (NMDARs) that function as heterotetrameric, ligand-gated cation channels with high calcium permeability and voltage-dependent block by Mg(2+). MDARs participate in synaptic plasticity. Channel activation requires binding of the neurotransmitter L-glutamate to the GluN2 subunit, glycine binding to the GluN1 subunit, plus membrane depolarization to eliminate channel inhibition by Mg(2+). NMDARs mediate simultaneously the potasium efflux and the influx of calcium and sodium. Each GluN2 subunit confers differential attributes to channel properties, including activation, deactivation and desensitization kinetics, pH sensitivity, Ca2(+) permeability, and binding to allosteric modulators. Plays a role in dendritic branching in brain neurons and in synaptic plasticity. The polypeptide is Glutamate receptor ionotropic, NMDA 2A (Xenopus laevis (African clawed frog)).